Reading from the N-terminus, the 333-residue chain is Fructose-1,6-bisphosphatase class 1 (333 aa).

Mg(2+) contacts are provided by Glu90, Asp112, Leu114, and Asp115. Residues 115-118 (DGSS), Asn207, and Lys273 contribute to the substrate site. Glu279 is a Mg(2+) binding site.

This sequence belongs to the FBPase class 1 family. Homotetramer. Requires Mg(2+) as cofactor.

Its subcellular location is the cytoplasm. The enzyme catalyses beta-D-fructose 1,6-bisphosphate + H2O = beta-D-fructose 6-phosphate + phosphate. It functions in the pathway carbohydrate biosynthesis; gluconeogenesis. This chain is Fructose-1,6-bisphosphatase class 1, found in Azoarcus sp. (strain BH72).